We begin with the raw amino-acid sequence, 366 residues long: Glucose 1-dehydrogenase (366 aa).

Cys39 is a Zn(2+) binding site. Substrate is bound at residue Thr41. His66 and Glu67 together coordinate Zn(2+). Asn89 contacts substrate. Residues Cys93, Cys96, Cys99, and Cys107 each coordinate Zn(2+). Glu114, Gln150, and Asp154 together coordinate substrate. Residue Gln150 participates in Zn(2+) binding. NADP(+) contacts are provided by residues 189–192 (TGPI), 211–213 (NRR), 277–279 (FGF), 305–307 (LVN), and Lys354. Substrate is bound at residue Asn307.

It belongs to the zinc-containing alcohol dehydrogenase family. Glucose 1-dehydrogenase subfamily. As to quaternary structure, homotetramer. It depends on Zn(2+) as a cofactor.

The enzyme catalyses D-glucose + NAD(+) = D-glucono-1,5-lactone + NADH + H(+). The catalysed reaction is D-glucose + NADP(+) = D-glucono-1,5-lactone + NADPH + H(+). It carries out the reaction D-galactose + NAD(+) = D-galactono-1,4-lactone + NADH + H(+). It catalyses the reaction D-galactose + NADP(+) = D-galactono-1,5-lactone + NADPH + H(+). The enzyme catalyses an aldopyranose + NAD(+) = aldono-1,5-lactone + NADH + H(+). The catalysed reaction is an aldopyranose + NADP(+) = aldono-1,5-lactone + NADPH + H(+). Its activity is regulated as follows. Inhibited by EDTA in vitro. Catalyzes the NAD(P)(+)-dependent oxidation of D-glucose to D-gluconate via gluconolactone. Displays broad substrate specificity since it is able to catalyze the oxidation of a number of alternative aldose sugars, such as D-galactose, D-xylose and L-arabinose, to the corresponding glyconate. Can utilize both NAD(+) and NADP(+) as electron acceptor. Physiologically, seems to be involved in the degradation of both glucose and galactose through a non-phosphorylative variant of the Entner-Doudoroff pathway. In Saccharolobus solfataricus (Sulfolobus solfataricus), this protein is Glucose 1-dehydrogenase.